Here is a 126-residue protein sequence, read N- to C-terminus: Tachykinin-3 (126 aa).

Positions 1 to 20 (MRSTLLFAVILALSSARSLG) are cleaved as a signal peptide. A propeptide spanning residues 21–83 (AVCEESQEQV…VGPKESPLPQ (63 aa)) is cleaved from the precursor. Methionine amide is present on Met95. The propeptide occupies 99–126 (NLQPDTPVDINQENIPSFGTFKYPPSVE). The disordered stretch occupies residues 102-126 (PDTPVDINQENIPSFGTFKYPPSVE).

Belongs to the tachykinin family.

Its subcellular location is the secreted. Tachykinins are active peptides which excite neurons, evoke behavioral responses, are potent vasodilators and secretagogues, and contract (directly or indirectly) many smooth muscles. Is a critical central regulator of gonadal function. The sequence is that of Tachykinin-3 (TAC3) from Bos taurus (Bovine).